The following is an 87-amino-acid chain: UPF0250 protein SG0794 (87 aa).

This sequence belongs to the UPF0250 family.

The chain is UPF0250 protein SG0794 from Sodalis glossinidius (strain morsitans).